A 279-amino-acid polypeptide reads, in one-letter code: GTP cyclohydrolase MptA (279 aa).

Belongs to the GTP cyclohydrolase IV family. As to quaternary structure, homodimer. Fe(2+) is required as a cofactor.

The catalysed reaction is GTP + H2O = 7,8-dihydroneopterin 2',3'-cyclic phosphate + formate + diphosphate + H(+). The protein operates within cofactor biosynthesis; 5,6,7,8-tetrahydromethanopterin biosynthesis. Functionally, converts GTP to 7,8-dihydro-D-neopterin 2',3'-cyclic phosphate, the first intermediate in the biosynthesis of coenzyme methanopterin. This is GTP cyclohydrolase MptA from Korarchaeum cryptofilum (strain OPF8).